The following is a 247-amino-acid chain: Small ribosomal subunit protein uS3 (247 aa).

One can recognise a KH type-2 domain in the interval 18–87; the sequence is IDEYLAKRFY…NPQITVRRVE (70 aa). The disordered stretch occupies residues 226–247; sequence QQGEVVGEAPNTPLEEQGQKQG.

The protein belongs to the universal ribosomal protein uS3 family. As to quaternary structure, part of the 30S ribosomal subunit.

In terms of biological role, binds the lower part of the 30S subunit head. This Hyperthermus butylicus (strain DSM 5456 / JCM 9403 / PLM1-5) protein is Small ribosomal subunit protein uS3.